The following is a 754-amino-acid chain: Catalase-peroxidase (754 aa).

The interval 1 to 29 (MGTQPARKLRNRVFPHPHNHRKEKPMAND) is disordered. Over residues 7-23 (RKLRNRVFPHPHNHRKE) the composition is skewed to basic residues. Catalysis depends on Trp-106, which acts as the Tryptophan radical intermediate. The segment at residues 122–249 (WHAAGTYRIA…LAAVQMGLIY (128 aa)) is a cross-link (tryptophyl-tyrosyl-methioninium (Trp-Tyr) (with M-275)). His-123 (proton acceptor) is an active-site residue. The segment at residues 249–275 (YVNPEGVDGHPDPLCTAQDVRTTFARM) is a cross-link (tryptophyl-tyrosyl-methioninium (Tyr-Met) (with W-122)). Heme b is bound at residue His-290.

Belongs to the peroxidase family. Peroxidase/catalase subfamily. Homodimer. Requires heme b as cofactor. Formation of the three residue Trp-Tyr-Met cross-link is important for the catalase, but not the peroxidase activity of the enzyme.

It catalyses the reaction H2O2 + AH2 = A + 2 H2O. The enzyme catalyses 2 H2O2 = O2 + 2 H2O. Functionally, bifunctional enzyme with both catalase and broad-spectrum peroxidase activity. Also displays NADH oxidase, isoniazid hydrazine lyase and isonicotinoyl-NAD synthase activities. This Synechocystis sp. (strain ATCC 27184 / PCC 6803 / Kazusa) protein is Catalase-peroxidase.